We begin with the raw amino-acid sequence, 3801 residues long: Lysosomal-trafficking regulator (3801 aa).

Residues 148-173 are disordered; that stretch reads KITHRYSVRDARKTQLSTSDSEANSD. Phosphoserine is present on Ser-164. Residue Thr-165 is modified to Phosphothreonine. Ser-166 bears the Phosphoserine mark. Residues 662 to 700 form a WD 1 repeat; it reads ELSSSLSSPSYRFQGILPSSGSEDLLWKWDALKAYQNFV. Residues 1181-1190 show a composition bias toward basic and acidic residues; it reads AMTEKSHQSA. Disordered stretches follow at residues 1181–1203 and 1221–1256; these read AMTEKSHQSAEELSSQPGDFSEE and YEADSESNPEDGETQDDGVDLKSETEGFSASSSPND. Over residues 1221–1238 the composition is skewed to acidic residues; that stretch reads YEADSESNPEDGETQDDG. Residues 1246 to 1256 are compositionally biased toward polar residues; the sequence is EGFSASSSPND. Ser-1509 and Ser-1510 each carry phosphoserine. The WD 2 repeat unit spans residues 1582 to 1626; it reads SQENIFLPSKWQHLVLTYLQQPQGKRRIHGKISIWVSGQRKPDVT. Ser-2105, Ser-2124, Ser-2213, Ser-2217, and Ser-2264 each carry phosphoserine. The span at 2205-2215 shows a compositional bias: basic and acidic residues; it reads KQLGAEPRSED. The segment at 2205-2224 is disordered; it reads KQLGAEPRSEDDSPGDESCP. Positions 3009 to 3115 constitute a BEACH-type PH domain; the sequence is AASESIRVNR…VRDDVYHNIL (107 aa). The 303-residue stretch at 3120–3422 folds into the BEACH domain; the sequence is PNLLEYGNIT…QLFHMAHVSR (303 aa). WD repeat units follow at residues 3563–3602, 3614–3653, 3656–3699, 3700–3744, and 3749–3788; these read SQQYQVTSCAWVPDSCQLFTGSKCGVITAYTNRFTSSTPS, GHTEEITSLFVCKPYSILISVSRDGTCIIWDLNRLCYVQS, GHKS…VGHV, HCRE…PVRE, and KSNKPIISLTFSCDGHHLYTANSDGTVIAWCRKDQQRLKQ.

In terms of assembly, interacts with CPAP, LIP8 and ZNF521. As to expression, abundantly expressed in adult and fetal thymus, peripheral blood leukocytes, bone marrow and several regions of the adult brain.

The protein localises to the cytoplasm. Adapter protein that regulates and/or fission of intracellular vesicles such as lysosomes. Might regulate trafficking of effectors involved in exocytosis. In cytotoxic T-cells and natural killer (NK) cells, has role in the regulation of size, number and exocytosis of lytic granules. In macrophages and dendritic cells, regulates phagosome maturation by controlling the conversion of early phagosomal compartments into late phagosomes. In macrophages and dendritic cells, specifically involved in TLR3- and TLR4-induced production of pro-inflammatory cytokines by regulating the endosomal TLR3- TICAM1/TRIF and TLR4- TICAM1/TRIF signaling pathways. The protein is Lysosomal-trafficking regulator (LYST) of Homo sapiens (Human).